A 159-amino-acid chain; its full sequence is U1 small nuclear ribonucleoprotein C (159 aa).

The Matrin-type zinc-finger motif lies at 4–36 (FYCDYCDTYLTHDSPSVRKTHCSGRKHKENVKD). Disordered stretches follow at residues 63-95 (PPTP…MPAP) and 139-159 (MRPP…RPDR). A compositionally biased stretch (pro residues) spans 77–95 (IPPPPSMGGPPRPGMMPAP).

It belongs to the U1 small nuclear ribonucleoprotein C family. In terms of assembly, component of the U1 snRNP. The U1 snRNP is composed of the U1 snRNA and the 7 core Sm proteins snrpb, snrpd1, snrpd2, snrpd3, snrpe, snrpf and snrpg that assemble in a heptameric protein ring on the Sm site of the small nuclear RNA to form the core snRNP, and at least 3 U1 snRNP-specific proteins snrnp70/U1-70K, snrpa/U1-A and snrpc/U1-C. snrpc/U1-C interacts with U1 snRNA and the 5' splice-site region of the pre-mRNA.

It is found in the nucleus. Its function is as follows. Component of the spliceosomal U1 snRNP, which is essential for recognition of the pre-mRNA 5' splice-site and the subsequent assembly of the spliceosome. snrpc/U1-C is directly involved in initial 5' splice-site recognition for both constitutive and regulated alternative splicing. The interaction with the 5' splice-site seems to precede base-pairing between the pre-mRNA and the U1 snRNA. Stimulates commitment or early (E) complex formation by stabilizing the base pairing of the 5' end of the U1 snRNA and the 5' splice-site region. In Xenopus tropicalis (Western clawed frog), this protein is U1 small nuclear ribonucleoprotein C.